The chain runs to 154 residues: Endoribonuclease YbeY (154 aa).

Zn(2+) contacts are provided by His113, His117, and His123.

Belongs to the endoribonuclease YbeY family. Requires Zn(2+) as cofactor.

The protein resides in the cytoplasm. In terms of biological role, single strand-specific metallo-endoribonuclease involved in late-stage 70S ribosome quality control and in maturation of the 3' terminus of the 16S rRNA. In Vibrio parahaemolyticus serotype O3:K6 (strain RIMD 2210633), this protein is Endoribonuclease YbeY.